Consider the following 287-residue polypeptide: MSYTVRKIGQPYTLEHRVYIEKDGQPVSPFHDIPLYANAEKTVLNMIVEIPRWTNAKQEISKEEFLNPIKQDTKKGKLRFVRNCFPHKGYLWNYGAFPQTWEDPNVVHPETKAKGDNDPLDVCEIGELVGYPGQVKQVKVLGVMALLDEEETDWKVIVIDVNDPLAPKLNDIEDVERHLPGLLRATNEWFRIYKIPDGKPENQFAFSGEAKNKKYAEEVIHECADAWEKLVSGKSDRGDISLANSTLGNSDSVDSSKLASIPRGENLPPAPIDGTIDKWFFISGAAV.

Arg-79 lines the diphosphate pocket. Mg(2+)-binding residues include Asp-116, Asp-121, and Asp-153. The span at 244–258 (NSTLGNSDSVDSSKL) shows a compositional bias: polar residues. A disordered region spans residues 244–269 (NSTLGNSDSVDSSKLASIPRGENLPP).

Belongs to the PPase family. It depends on Mg(2+) as a cofactor.

It localises to the cytoplasm. It catalyses the reaction diphosphate + H2O = 2 phosphate + H(+). Functionally, involved in osmoadaptation. This chain is Inorganic pyrophosphatase (ipp1), found in Emericella nidulans (strain FGSC A4 / ATCC 38163 / CBS 112.46 / NRRL 194 / M139) (Aspergillus nidulans).